The chain runs to 501 residues: E3 ubiquitin-protein ligase TRIM35 (501 aa).

At Met-1 the chain carries N-acetylmethionine. A Phosphoserine modification is found at Ser-8. Residues 21 to 61 (CAVCYDPFRDAVTLRCGHNFCRRCVSGCWEVQTTPSCPVCK) form an RING-type zinc finger. The B box-type zinc finger occupies 96–137 (RSPRPCRAHRAPLTLFCVEDKELLCCACQADARHQEHRVQPI). Zn(2+) is bound by residues Cys-101, His-104, Cys-123, and His-129. Residues 209–252 (MKEESRKKHLLAEEKMKQLAEQTEALAREIERLQMEMKEDDMTF) adopt a coiled-coil conformation. Residues 284–495 (LESLQYRVWK…LRICHLRVSI (212 aa)) form the B30.2/SPRY domain.

Interacts with PKM isoform M2, but not isoform M1; this interaction may compete with that between PKM and FGFR1, and hence reduces FGFR1-dependent tyrosine phosphorylation of PKM. Interacts with IRF7; this interaction promotes IRF7 proteasomal degradation. Interacts with TRAF3; this interaction promotes TRAF3 activation.

Its subcellular location is the cytoplasm. It is found in the nucleus. It carries out the reaction S-ubiquitinyl-[E2 ubiquitin-conjugating enzyme]-L-cysteine + [acceptor protein]-L-lysine = [E2 ubiquitin-conjugating enzyme]-L-cysteine + N(6)-ubiquitinyl-[acceptor protein]-L-lysine.. Its pathway is protein modification; protein ubiquitination. E3 ubiquitin-protein ligase that participates in multiple biological processes including cell death, glucose metabolism, and in particular, the innate immune response. Mediates 'Lys-63'-linked polyubiquitination of TRAF3 thereby promoting type I interferon production via RIG-I signaling pathway. Can also catalyze 'Lys-48'-linked polyubiquitination and proteasomal degradation of viral proteins such as influenza virus PB2. Acts as a negative feedback regulator of TLR7- and TLR9-triggered signaling. Mechanistically, promotes the 'Lys-48'-linked ubiquitination of IRF7 and induces its degradation via a proteasome-dependent pathway. Reduces FGFR1-dependent tyrosine phosphorylation of PKM, inhibiting PKM-dependent lactate production, glucose metabolism, and cell growth. The polypeptide is E3 ubiquitin-protein ligase TRIM35 (Trim35) (Rattus norvegicus (Rat)).